A 324-amino-acid polypeptide reads, in one-letter code: HTH-type transcriptional regulator GlxA (324 aa).

One can recognise an HTH araC/xylS-type domain in the interval 223 to 321 (LAVLEKMETA…SQTPGSLRRR (99 aa)). DNA-binding regions (H-T-H motif) lie at residues 240-261 (TAMA…REHR) and 288-311 (IPEI…KRLF).

The polypeptide is HTH-type transcriptional regulator GlxA (glxA) (Rhizobium meliloti (strain 1021) (Ensifer meliloti)).